Consider the following 511-residue polypeptide: Histidine ammonia-lyase (511 aa).

Residues 142-144 (ASG) constitute a cross-link (5-imidazolinone (Ala-Gly)). A 2,3-didehydroalanine (Ser) modification is found at Ser143.

This sequence belongs to the PAL/histidase family. In terms of processing, contains an active site 4-methylidene-imidazol-5-one (MIO), which is formed autocatalytically by cyclization and dehydration of residues Ala-Ser-Gly.

It is found in the cytoplasm. The enzyme catalyses L-histidine = trans-urocanate + NH4(+). Its pathway is amino-acid degradation; L-histidine degradation into L-glutamate; N-formimidoyl-L-glutamate from L-histidine: step 1/3. The sequence is that of Histidine ammonia-lyase from Chelativorans sp. (strain BNC1).